A 326-amino-acid chain; its full sequence is Adenosine receptor A1 (326 aa).

The Extracellular segment spans residues 1 to 10 (MPPSISAFQA). Residues 11–33 (AYIGIEVLIALVSVPGNVLVIWA) form a helical membrane-spanning segment. Residues 34-46 (VKVNQALRDATFC) lie on the Cytoplasmic side of the membrane. Residues 47 to 69 (FIVSLAVADVAVGALVIPLAILI) form a helical membrane-spanning segment. The Extracellular segment spans residues 70 to 80 (NIGPQTYFHTC). Cys80 and Cys169 are joined by a disulfide. Residues 81 to 102 (LMVACPVLILTQSSILALLAIA) traverse the membrane as a helical segment. Residues 103–123 (VDRYLRVKIPLRYKMVVTPRR) are Cytoplasmic-facing. A helical transmembrane segment spans residues 124–146 (AAVAIAGCWILSFVVGLTPMFGW). At 147-176 (NNLSAVERAWAANGSMGEPVIKCEFEKVIS) the chain is on the extracellular side. Asn159 carries an N-linked (GlcNAc...) asparagine glycan. A helical transmembrane segment spans residues 177-201 (MEYMVYFNFFVWVLPPLLLMVLIYL). At 202-235 (EVFYLIRKQLNKKVSASSGDPQKYYGKELKIAKS) the chain is on the cytoplasmic side. Residues 236 to 259 (LALILFLFALSWLPLHILNCITLF) form a helical membrane-spanning segment. At 260 to 267 (CPSCHKPS) the chain is on the extracellular side. A helical membrane pass occupies residues 268-292 (ILTYIAIFLTHGNSAMNPIVYAFRI). Over 293–326 (QKFRVTFLKIWNDHFRCQPAPPIDEDLPEERPDD) the chain is Cytoplasmic. A lipid anchor (S-palmitoyl cysteine) is attached at Cys309.

This sequence belongs to the G-protein coupled receptor 1 family.

The protein localises to the cell membrane. Its function is as follows. Receptor for adenosine. The activity of this receptor is mediated by G proteins which inhibit adenylyl cyclase. This chain is Adenosine receptor A1 (ADORA1), found in Homo sapiens (Human).